The following is a 601-amino-acid chain: Putative Lon protease homolog (601 aa).

In terms of domain architecture, Lon proteolytic spans 363 to 560; it reads GEIVGQINGL…YQACELLFGR (198 aa). Active-site residues include Ser-455 and Lys-498.

This sequence belongs to the peptidase S16 family.

In Haemophilus influenzae (strain ATCC 51907 / DSM 11121 / KW20 / Rd), this protein is Putative Lon protease homolog.